The following is a 400-amino-acid chain: Phosphoglycerate kinase (400 aa).

Substrate contacts are provided by residues 24–26 (DFN), Arg-39, 62–65 (HLGK), Arg-123, and Arg-156. Residues Lys-207, Gly-298, Glu-329, and 356 to 359 (GGDS) contribute to the ATP site.

Belongs to the phosphoglycerate kinase family. In terms of assembly, monomer.

It localises to the cytoplasm. It carries out the reaction (2R)-3-phosphoglycerate + ATP = (2R)-3-phospho-glyceroyl phosphate + ADP. Its pathway is carbohydrate degradation; glycolysis; pyruvate from D-glyceraldehyde 3-phosphate: step 2/5. The chain is Phosphoglycerate kinase from Clostridioides difficile (strain 630) (Peptoclostridium difficile).